Here is an 87-residue protein sequence, read N- to C-terminus: Cell division topological specificity factor (87 aa).

The protein belongs to the MinE family.

Prevents the cell division inhibition by proteins MinC and MinD at internal division sites while permitting inhibition at polar sites. This ensures cell division at the proper site by restricting the formation of a division septum at the midpoint of the long axis of the cell. This is Cell division topological specificity factor from Herpetosiphon aurantiacus (strain ATCC 23779 / DSM 785 / 114-95).